The primary structure comprises 228 residues: MKKAVVLLSGGLDSTTCLALAKSQGFACYALSFSYGQRHSAELCAATRIAKHMDAADHKIVTLDTALFGGSALTDASIEVPEFKESPEIPVTYVPARNTIFLAMALGYAESIGARDIFIGASSVDYSHYPDCRPEFIESFQSLANLATKAGIEGDRFTINAPLQYLSKVQTIQLGTELGVDYGLTVSCYQANEAGEACGQCDSCTFRKRGFKSAGVNDPTRYQKCVHI.

Residue 8 to 18 (LSGGLDSTTCL) participates in ATP binding. The Zn(2+) site is built by Cys188, Cys198, Cys201, and Cys204.

It belongs to the QueC family. Requires Zn(2+) as cofactor.

The enzyme catalyses 7-carboxy-7-deazaguanine + NH4(+) + ATP = 7-cyano-7-deazaguanine + ADP + phosphate + H2O + H(+). The protein operates within purine metabolism; 7-cyano-7-deazaguanine biosynthesis. In terms of biological role, catalyzes the ATP-dependent conversion of 7-carboxy-7-deazaguanine (CDG) to 7-cyano-7-deazaguanine (preQ(0)). The polypeptide is 7-cyano-7-deazaguanine synthase (Legionella pneumophila (strain Corby)).